Here is a 197-residue protein sequence, read N- to C-terminus: ATP-dependent Clp protease proteolytic subunit (197 aa).

Catalysis depends on S98, which acts as the Nucleophile. Residue H123 is part of the active site.

It belongs to the peptidase S14 family. As to quaternary structure, fourteen ClpP subunits assemble into 2 heptameric rings which stack back to back to give a disk-like structure with a central cavity, resembling the structure of eukaryotic proteasomes.

The protein localises to the cytoplasm. The catalysed reaction is Hydrolysis of proteins to small peptides in the presence of ATP and magnesium. alpha-casein is the usual test substrate. In the absence of ATP, only oligopeptides shorter than five residues are hydrolyzed (such as succinyl-Leu-Tyr-|-NHMec, and Leu-Tyr-Leu-|-Tyr-Trp, in which cleavage of the -Tyr-|-Leu- and -Tyr-|-Trp bonds also occurs).. In terms of biological role, cleaves peptides in various proteins in a process that requires ATP hydrolysis. Has a chymotrypsin-like activity. Plays a major role in the degradation of misfolded proteins. This chain is ATP-dependent Clp protease proteolytic subunit, found in Enterococcus faecalis (strain ATCC 700802 / V583).